The primary structure comprises 676 residues: XK-related protein 5 (676 aa).

Helical transmembrane passes span 37 to 57 (WLAL…FLWF), 114 to 134 (LLEA…VFLA), 140 to 160 (IVPG…LVSY), 206 to 226 (VWVL…LVAQ), 239 to 259 (LFNL…WDSP), 266 to 286 (SFYL…TDFL), and 294 to 314 (LWTV…LVIY). Disordered stretches follow at residues 336-362 (PIED…DSSS), 372-391 (TSLD…GLGE), 495-538 (LEDN…KEGQ), and 598-661 (PIPG…IQRD). The span at 498–509 (NATTQKPPATQE) shows a compositional bias: polar residues.

The protein belongs to the XK family.

It is found in the cell membrane. This chain is XK-related protein 5, found in Mus musculus (Mouse).